The following is a 499-amino-acid chain: UTP--glucose-1-phosphate uridylyltransferase (499 aa).

Serine 2 carries the post-translational modification N-acetylserine. Phosphoserine is present on serine 17. Phosphothreonine is present on threonine 19. Residues serine 21 and serine 79 each carry the phosphoserine modification. UTP contacts are provided by residues 109-112 (LNGG), lysine 123, glutamine 186, and glycine 215. Substrate is bound at residue 111–112 (GG). Lysine 123 is a binding site for Mg(2+). Residues histidine 216 and 244 to 246 (NGD) contribute to the substrate site. Aspartate 246 is a binding site for UTP. Aspartate 246 lines the Mg(2+) pocket. Arginine 369 is modified (omega-N-methylarginine). Position 388 (lysine 388) interacts with UTP. Residue lysine 388 is part of the active site. Positions 448 to 499 (HLTITGNVFLGKDVTLRGTVIIVCSDGHKIDIPNGSILENVVVTGNLQILEH) are oligomerization.

This sequence belongs to the UDPGP type 1 family. As to quaternary structure, homooctamer.

It carries out the reaction alpha-D-glucose 1-phosphate + UTP + H(+) = UDP-alpha-D-glucose + diphosphate. Plays a central role as a glucosyl donor in cellular metabolic pathways. The polypeptide is UTP--glucose-1-phosphate uridylyltransferase (Saccharomyces cerevisiae (strain ATCC 204508 / S288c) (Baker's yeast)).